The chain runs to 364 residues: GTPase Obg (364 aa).

In terms of domain architecture, Obg spans 1–159 (MKFLDEAKVY…KTIWLHLKLI (159 aa)). In terms of domain architecture, OBG-type G spans 160–327 (ADAGLVGLPN…VLRALRDIIV (168 aa)). GTP contacts are provided by residues 166 to 173 (GLPNAGKS), 191 to 195 (FTTLH), 212 to 215 (DIPG), 279 to 282 (SQID), and 308 to 310 (SAV). 2 residues coordinate Mg(2+): Ser173 and Thr193. The disordered stretch occupies residues 333–364 (EKPAKVPKLRHRDMVVTDEGEDKGGDEGDDQP).

It belongs to the TRAFAC class OBG-HflX-like GTPase superfamily. OBG GTPase family. In terms of assembly, monomer. Requires Mg(2+) as cofactor.

The protein resides in the cytoplasm. An essential GTPase which binds GTP, GDP and possibly (p)ppGpp with moderate affinity, with high nucleotide exchange rates and a fairly low GTP hydrolysis rate. Plays a role in control of the cell cycle, stress response, ribosome biogenesis and in those bacteria that undergo differentiation, in morphogenesis control. This chain is GTPase Obg, found in Rhizobium johnstonii (strain DSM 114642 / LMG 32736 / 3841) (Rhizobium leguminosarum bv. viciae).